Reading from the N-terminus, the 142-residue chain is Hemoglobin subunit alpha-1/2 (142 aa).

The Globin domain maps to 2–142 (VLSPADKTNI…VSTVLTSKYR (141 aa)). Serine 4 carries the phosphoserine modification. Lysine 8 is modified (N6-succinyllysine). Position 9 is a phosphothreonine (threonine 9). Lysine 12 is modified (N6-succinyllysine). The residue at position 17 (lysine 17) is an N6-acetyllysine; alternate. Lysine 17 carries the post-translational modification N6-succinyllysine; alternate. At tyrosine 25 the chain carries Phosphotyrosine. Lysine 41 carries the N6-succinyllysine modification. Histidine 59 is a binding site for O2. Histidine 88 contributes to the heme b binding site. Serine 103 is subject to Phosphoserine. A Phosphothreonine modification is found at threonine 109. Serine 125 bears the Phosphoserine mark. 2 positions are modified to phosphothreonine: threonine 135 and threonine 138. Serine 139 bears the Phosphoserine mark.

This sequence belongs to the globin family. Heterotetramer of two alpha chains and two beta chains. In terms of tissue distribution, red blood cells.

Its function is as follows. Involved in oxygen transport from the lung to the various peripheral tissues. The protein is Hemoglobin subunit alpha-1/2 of Oryctolagus cuniculus (Rabbit).